The following is a 317-amino-acid chain: Porphobilinogen deaminase (317 aa).

Cys-245 carries the post-translational modification S-(dipyrrolylmethanemethyl)cysteine.

This sequence belongs to the HMBS family. In terms of assembly, monomer. Requires dipyrromethane as cofactor.

The catalysed reaction is 4 porphobilinogen + H2O = hydroxymethylbilane + 4 NH4(+). It participates in porphyrin-containing compound metabolism; protoporphyrin-IX biosynthesis; coproporphyrinogen-III from 5-aminolevulinate: step 2/4. It functions in the pathway porphyrin-containing compound metabolism; chlorophyll biosynthesis. In terms of biological role, tetrapolymerization of the monopyrrole PBG into the hydroxymethylbilane pre-uroporphyrinogen in several discrete steps. In Synechococcus sp. (strain RCC307), this protein is Porphobilinogen deaminase.